Here is a 336-residue protein sequence, read N- to C-terminus: E3 ubiquitin-protein ligase RING2 (336 aa).

Positions 2 to 179 (TQTVQTNGVQ…AEDNGDSSHC (178 aa)) are interaction with HIP2. The segment at 51–91 (CPICLDMLKNTMTTKECLHRFCADCIITALRSGNKECPTCR) adopts an RING-type zinc-finger fold. The interaction with nucleosomes via an acidic patch on histone H2A and histone H2B stretch occupies residues 93 to 98 (KLVSKR). Residues 158-218 (RGKKHQIENG…NATENGGGDI (61 aa)) form a disordered region. Polar residues predominate over residues 176 to 190 (SSHCSNASVHSNQEA).

In terms of assembly, component of chromatin-associated Polycomb (PcG) complexes. Component of a PRC1-like complex. Component of some MLL1/MLL complex.

Its subcellular location is the nucleus. It localises to the cytoplasm. The protein localises to the chromosome. The catalysed reaction is S-ubiquitinyl-[E2 ubiquitin-conjugating enzyme]-L-cysteine + [acceptor protein]-L-lysine = [E2 ubiquitin-conjugating enzyme]-L-cysteine + N(6)-ubiquitinyl-[acceptor protein]-L-lysine.. The protein operates within protein modification; protein ubiquitination. In terms of biological role, E3 ubiquitin-protein ligase that mediates monoubiquitination of 'Lys-119' of histone H2A (H2AK119Ub), thereby playing a central role in histone code and gene regulation. H2AK119Ub gives a specific tag for epigenetic transcriptional repression. Essential component of a Polycomb group (PcG) multiprotein PRC1-like complex, a complex class required to maintain the transcriptionally repressive state of many genes, including Hox genes, throughout development. PcG PRC1 complex acts via chromatin remodeling and modification of histones, rendering chromatin heritably changed in its expressibility. This chain is E3 ubiquitin-protein ligase RING2 (rnf2), found in Danio rerio (Zebrafish).